The chain runs to 532 residues: MFTDLLHSSYFSLFLIVALGFMLGRIKIKGLSLDVSAVIFIALLFGHFGVIIPKELGNFGLVLFIFTIGIQAGPGFFDSFRSKGKTLIIITMLIISSACLTAVGLKYAFGIDTPSVVGLVAGALTSTPGLAVAIDSTNSPLASIAYGIAYPFGVIGVILFVKLLPKIMRIDLDKEARRLEIERRGQFPELGTCIYRITNPSVFGRSLMQINARAMTGAVISRLKHQEEISIPTAHTVLHEGDYIQAVGSEEALTQLAVLVGEREEGELPLENTQEIESLLLTKKDMINKQLGDLNLMKNFGCTVTRVRRSGIDLSPSPDLALKFGDKLMVVGEKEGIKGVARLLGNNAKKLSDTDFFPIAMGIVLGVLFGKLNISFPGGLSFSPGLTGGVLMVALLLSAIGKTGPILWSMSGPANQLLRQLGLLLFLAEVGTSAGKNLVATFQESGLLLFGVGAAITLVPMLIAAFVGRLVFKISLLDLLGTITGGMTSTPGLAAADSMVDSNIPSVAYATVYPIAMVFLILFIQVIATVVY.

A run of 6 helical transmembrane segments spans residues 7 to 26 (HSSY…LGRI), 30 to 52 (GLSL…GVII), 59 to 77 (FGLV…PGFF), 87 to 109 (LIII…KYAF), 116 to 134 (VVGL…AVAI), and 139 to 161 (SPLA…ILFV). RCK C-terminal domains are found at residues 179–262 (LEIE…LVGE) and 263–346 (REEG…LLGN). A run of 4 helical transmembrane segments spans residues 356 to 378 (FFPI…SFPG), 388 to 410 (GGVL…LWSM), 446 to 468 (GLLL…AFVG), and 509 to 531 (YATV…ATVV).

It belongs to the AAE transporter (TC 2.A.81) family.

The protein resides in the cell membrane. This is an uncharacterized protein from Bacteroides fragilis (strain YCH46).